Here is a 252-residue protein sequence, read N- to C-terminus: Aspartate/glutamate leucyltransferase (252 aa).

The protein belongs to the R-transferase family. Bpt subfamily.

It is found in the cytoplasm. It carries out the reaction N-terminal L-glutamyl-[protein] + L-leucyl-tRNA(Leu) = N-terminal L-leucyl-L-glutamyl-[protein] + tRNA(Leu) + H(+). It catalyses the reaction N-terminal L-aspartyl-[protein] + L-leucyl-tRNA(Leu) = N-terminal L-leucyl-L-aspartyl-[protein] + tRNA(Leu) + H(+). Its function is as follows. Functions in the N-end rule pathway of protein degradation where it conjugates Leu from its aminoacyl-tRNA to the N-termini of proteins containing an N-terminal aspartate or glutamate. This is Aspartate/glutamate leucyltransferase from Xanthomonas campestris pv. campestris (strain B100).